Reading from the N-terminus, the 374-residue chain is Ribonuclease D (374 aa).

One can recognise a 3'-5' exonuclease domain in the interval 3–171; the sequence is YQLITTDDGL…MAIRLVEETT (169 aa). The 80-residue stretch at 210–289 folds into the HRDC domain; that stretch reads KGRHLACLQK…AETQTMDAAE (80 aa).

This sequence belongs to the RNase D family. Requires a divalent metal cation as cofactor.

The protein localises to the cytoplasm. The enzyme catalyses Exonucleolytic cleavage that removes extra residues from the 3'-terminus of tRNA to produce 5'-mononucleotides.. Exonuclease involved in the 3' processing of various precursor tRNAs. Initiates hydrolysis at the 3'-terminus of an RNA molecule and releases 5'-mononucleotides. The protein is Ribonuclease D of Musicola paradisiaca (strain Ech703) (Dickeya paradisiaca).